A 375-amino-acid polypeptide reads, in one-letter code: tRNA-specific 2-thiouridylase MnmA (375 aa).

ATP-binding positions include 16-23 (GMSGGVDS) and Met42. Residues 102–104 (NPD) form an interaction with target base in tRNA region. The active-site Nucleophile is Cys107. Cys107 and Cys203 are disulfide-bonded. Gly131 is a binding site for ATP. The segment at 153–155 (KDQ) is interaction with tRNA. Cys203 functions as the Cysteine persulfide intermediate in the catalytic mechanism. Residues 315 to 316 (RY) are interaction with tRNA.

It belongs to the MnmA/TRMU family.

The protein localises to the cytoplasm. The enzyme catalyses S-sulfanyl-L-cysteinyl-[protein] + uridine(34) in tRNA + AH2 + ATP = 2-thiouridine(34) in tRNA + L-cysteinyl-[protein] + A + AMP + diphosphate + H(+). Its function is as follows. Catalyzes the 2-thiolation of uridine at the wobble position (U34) of tRNA, leading to the formation of s(2)U34. This is tRNA-specific 2-thiouridylase MnmA from Pseudomonas aeruginosa (strain LESB58).